We begin with the raw amino-acid sequence, 208 residues long: Uracil phosphoribosyltransferase (208 aa).

5-phospho-alpha-D-ribose 1-diphosphate-binding positions include Arg78, Arg103, and 130–138 (DPMLATGGS). Uracil contacts are provided by residues Ile193 and 198 to 200 (GDA). Asp199 contacts 5-phospho-alpha-D-ribose 1-diphosphate.

Belongs to the UPRTase family. It depends on Mg(2+) as a cofactor.

It catalyses the reaction UMP + diphosphate = 5-phospho-alpha-D-ribose 1-diphosphate + uracil. The protein operates within pyrimidine metabolism; UMP biosynthesis via salvage pathway; UMP from uracil: step 1/1. Allosterically activated by GTP. Catalyzes the conversion of uracil and 5-phospho-alpha-D-ribose 1-diphosphate (PRPP) to UMP and diphosphate. This chain is Uracil phosphoribosyltransferase, found in Neisseria meningitidis serogroup C (strain 053442).